Consider the following 209-residue polypeptide: ATP phosphoribosyltransferase (209 aa).

It belongs to the ATP phosphoribosyltransferase family. Short subfamily. Heteromultimer composed of HisG and HisZ subunits.

The protein localises to the cytoplasm. It catalyses the reaction 1-(5-phospho-beta-D-ribosyl)-ATP + diphosphate = 5-phospho-alpha-D-ribose 1-diphosphate + ATP. Its pathway is amino-acid biosynthesis; L-histidine biosynthesis; L-histidine from 5-phospho-alpha-D-ribose 1-diphosphate: step 1/9. In terms of biological role, catalyzes the condensation of ATP and 5-phosphoribose 1-diphosphate to form N'-(5'-phosphoribosyl)-ATP (PR-ATP). Has a crucial role in the pathway because the rate of histidine biosynthesis seems to be controlled primarily by regulation of HisG enzymatic activity. This Caldicellulosiruptor bescii (strain ATCC BAA-1888 / DSM 6725 / KCTC 15123 / Z-1320) (Anaerocellum thermophilum) protein is ATP phosphoribosyltransferase.